A 2697-amino-acid chain; its full sequence is Target of rapamycin homolog (2697 aa).

Positions 1 to 25 (MLQQHGISFQMNADRQNKAATTSNR) are disordered. HEAT repeat units follow at residues 235 to 272 (LRVNLFFKYIFNAVRDKNPAVRIAGIDALHVVLTIVSQ), 649 to 687 (QTIYGVLRAVCSVIVNDQDVRVRMQVISCFGQMPRPFLA), 689 to 726 (LAQPEMLEVQFMALHDEKLEMQQACVTLLGRLAELNPA), 731 to 768 (RLRLMLLETLSQMQQSGQARLEQHSAKMIAQLAKQSPK), 815 to 853 (KNLKPLFEKLTHMINDSSSLHKREAALRAIGGICRSTAY), 863 to 900 (SLLDDLLRILKTVMSNTMRREAIKTLGILGAIDPYTHK), and 1073 to 1110 (KYTGELIPYLLTVLQTDKTKERVLTVKVMESIQKLTHC). Residues 1438-2153 (VLGRWAEQTK…IYALTVASRS (716 aa)) form the FAT domain. 2 disordered regions span residues 1945 to 1981 (TVISPPQQPQQPKKMHIPPVTRATSPPPPAQKSPQPA) and 2017 to 2039 (SNSSLPPQHHHVSPLSNDSPSNS). Residues 1969–1981 (SPPPPAQKSPQPA) show a composition bias toward pro residues. Over residues 2030 to 2039 (PLSNDSPSNS) the composition is skewed to polar residues. The PI3K/PI4K catalytic domain maps to 2332–2647 (FSSKMNVITS…TTDSIMETIK (316 aa)). Residues 2338–2344 (VITSKQR) are G-loop. Residues 2512 to 2520 (GLGDRHPSN) are catalytic loop. Residues 2532-2557 (HIDFGDCFEVAMLREKFPERVPFRLT) are activation loop. The segment at 2615–2635 (DPKTRKDTGGRQNMAGAVLPS) is disordered. In terms of domain architecture, FATC spans 2665-2697 (EPLQVTEQLAMLTEQATSPLNLCQSYIGWCPFW).

The protein belongs to the PI3/PI4-kinase family. In terms of tissue distribution, ubiquitous. Expressed in all major tissues and organs, including the intestine, gonads and hypodermal cells. Expressed in neurons.

Its subcellular location is the nucleus. It carries out the reaction L-seryl-[protein] + ATP = O-phospho-L-seryl-[protein] + ADP + H(+). The enzyme catalyses L-threonyl-[protein] + ATP = O-phospho-L-threonyl-[protein] + ADP + H(+). Its function is as follows. Serine/threonine-protein kinase that regulates the mRNA translation machinery, probably by modulating the activity of translation factors such as eIF-4G and eIF-2. It may have some protein kinase activity instead of lipid kinase activity. May play a role in P-granule degradation by autophagy in somatic cells during embryogenesis. Required, during larval development, for the establishment of the proper number of germline progenitors, probably upstream of rsks-1 and ife-1. Required for larval development. May act as a mediator of lifespan regulation by insulin signaling and nutrient sensing. The polypeptide is Target of rapamycin homolog (Caenorhabditis elegans).